A 340-amino-acid chain; its full sequence is Beta-hexosaminidase (340 aa).

Substrate contacts are provided by residues Asp60, Arg68, Arg127, and 157 to 158 (KH). The active-site Proton donor/acceptor is the His170. The Nucleophile role is filled by Asp242.

This sequence belongs to the glycosyl hydrolase 3 family. NagZ subfamily.

Its subcellular location is the cytoplasm. It catalyses the reaction Hydrolysis of terminal non-reducing N-acetyl-D-hexosamine residues in N-acetyl-beta-D-hexosaminides.. It participates in cell wall biogenesis; peptidoglycan recycling. Its function is as follows. Plays a role in peptidoglycan recycling by cleaving the terminal beta-1,4-linked N-acetylglucosamine (GlcNAc) from peptide-linked peptidoglycan fragments, giving rise to free GlcNAc, anhydro-N-acetylmuramic acid and anhydro-N-acetylmuramic acid-linked peptides. The protein is Beta-hexosaminidase of Glaesserella parasuis serovar 5 (strain SH0165) (Haemophilus parasuis).